A 158-amino-acid chain; its full sequence is 6,7-dimethyl-8-ribityllumazine synthase (158 aa).

Residues Phe-23, 61–63 (SFE), and 85–87 (AVI) contribute to the 5-amino-6-(D-ribitylamino)uracil site. Residue 90–91 (ET) coordinates (2S)-2-hydroxy-3-oxobutyl phosphate. His-93 serves as the catalytic Proton donor. Phe-118 contributes to the 5-amino-6-(D-ribitylamino)uracil binding site. Arg-132 lines the (2S)-2-hydroxy-3-oxobutyl phosphate pocket.

This sequence belongs to the DMRL synthase family.

The enzyme catalyses (2S)-2-hydroxy-3-oxobutyl phosphate + 5-amino-6-(D-ribitylamino)uracil = 6,7-dimethyl-8-(1-D-ribityl)lumazine + phosphate + 2 H2O + H(+). The protein operates within cofactor biosynthesis; riboflavin biosynthesis; riboflavin from 2-hydroxy-3-oxobutyl phosphate and 5-amino-6-(D-ribitylamino)uracil: step 1/2. Catalyzes the formation of 6,7-dimethyl-8-ribityllumazine by condensation of 5-amino-6-(D-ribitylamino)uracil with 3,4-dihydroxy-2-butanone 4-phosphate. This is the penultimate step in the biosynthesis of riboflavin. This Prochlorococcus marinus subsp. pastoris (strain CCMP1986 / NIES-2087 / MED4) protein is 6,7-dimethyl-8-ribityllumazine synthase.